Reading from the N-terminus, the 229-residue chain is NAD-dependent protein deacetylase (229 aa).

The 229-residue stretch at 1–229 (MNNLKEAIKQ…NDAVKVFAEI (229 aa)) folds into the Deacetylase sirtuin-type domain. A20, R32, Q96, I98, D99, H114, T181, S182, N205, and V223 together coordinate NAD(+). Nicotinamide is bound by residues I98 and D99. The active-site Proton acceptor is H114.

Belongs to the sirtuin family. Class U subfamily.

The protein resides in the cytoplasm. It catalyses the reaction N(6)-acetyl-L-lysyl-[protein] + NAD(+) + H2O = 2''-O-acetyl-ADP-D-ribose + nicotinamide + L-lysyl-[protein]. In terms of biological role, NAD-dependent protein deacetylase which modulates the activities of several enzymes which are inactive in their acetylated form. In Listeria innocua serovar 6a (strain ATCC BAA-680 / CLIP 11262), this protein is NAD-dependent protein deacetylase.